The primary structure comprises 514 residues: Glutamyl-tRNA(Gln) amidotransferase subunit A (514 aa).

Residues lysine 76 and serine 151 each act as charge relay system in the active site. Catalysis depends on serine 175, which acts as the Acyl-ester intermediate.

This sequence belongs to the amidase family. GatA subfamily. As to quaternary structure, heterotrimer of A, B and C subunits.

It catalyses the reaction L-glutamyl-tRNA(Gln) + L-glutamine + ATP + H2O = L-glutaminyl-tRNA(Gln) + L-glutamate + ADP + phosphate + H(+). Its function is as follows. Allows the formation of correctly charged Gln-tRNA(Gln) through the transamidation of misacylated Glu-tRNA(Gln) in organisms which lack glutaminyl-tRNA synthetase. The reaction takes place in the presence of glutamine and ATP through an activated gamma-phospho-Glu-tRNA(Gln). The chain is Glutamyl-tRNA(Gln) amidotransferase subunit A from Salinibacter ruber (strain DSM 13855 / M31).